Reading from the N-terminus, the 219-residue chain is Transmembrane protein 179B (219 aa).

The next 4 helical transmembrane spans lie at P6–A26, I69–F89, L105–G125, and A167–I187. Residues I195–P219 form a disordered region.

It belongs to the TMEM179 family.

The protein resides in the membrane. The protein is Transmembrane protein 179B (tmem179b) of Danio rerio (Zebrafish).